A 428-amino-acid polypeptide reads, in one-letter code: Putative G-protein coupled receptor F59B2.13 (428 aa).

The Extracellular portion of the chain corresponds to 1-30 (MSNNTTIPSKTATDICLTDRQMSLSVSSTE). N-linked (GlcNAc...) asparagine glycosylation is found at Asn-3 and Asn-4. Residues 31–51 (GVLIGTIIPILVLFGISGNIL) form a helical membrane-spanning segment. Residues 52–67 (NLTVLLAPNLRTRSNQ) lie on the Cytoplasmic side of the membrane. The helical transmembrane segment at 68–88 (LLACLAVADIVSLVVILPHSM) threads the bilayer. Residues 89-110 (AHYETFETALWFRKFYGKYKFQ) lie on the Extracellular side of the membrane. A helical membrane pass occupies residues 111-131 (IIAMTNWSIATATWLVFVICL). Residues 132 to 154 (ERLIIIKYPLSVRKQAKFFTPRN) lie on the Cytoplasmic side of the membrane. Residues 155-175 (VVTIIVVTTFILTSYNHVSHA) form a helical membrane-spanning segment. The Extracellular portion of the chain corresponds to 176–222 (CAEKLFCNGTQYHVACLGIDSERWFRNEPNPNSEFMKSVVRVAPQVN). An N-linked (GlcNAc...) asparagine glycan is attached at Asn-183. The helical transmembrane segment at 223-243 (AIFVVLIPVVLVIIFNVMLIL) threads the bilayer. Over 244–278 (TLRQRTKLFEPSKTIRGDSQFTQLQSKTEHKVTIT) the chain is Cytoplasmic. Residues 279 to 299 (VTAIVTCFTITQSPSAFVTFL) form a helical membrane-spanning segment. Residues 300-309 (SSYVHRDWVT) are Extracellular-facing. Residues 310–330 (LSAICTILVVLGKALNFVLFC) traverse the membrane as a helical segment. The Cytoplasmic segment spans residues 331-428 (LSSASFRQRL…KEFRRGTSFV (98 aa)).

It belongs to the G-protein coupled receptor 1 family.

It localises to the cell membrane. The protein is Putative G-protein coupled receptor F59B2.13 of Caenorhabditis elegans.